The sequence spans 232 residues: Large ribosomal subunit protein uL1 (232 aa).

It belongs to the universal ribosomal protein uL1 family. As to quaternary structure, part of the 50S ribosomal subunit.

In terms of biological role, binds directly to 23S rRNA. The L1 stalk is quite mobile in the ribosome, and is involved in E site tRNA release. Its function is as follows. Protein L1 is also a translational repressor protein, it controls the translation of the L11 operon by binding to its mRNA. The protein is Large ribosomal subunit protein uL1 of Stenotrophomonas maltophilia (strain R551-3).